We begin with the raw amino-acid sequence, 215 residues long: Protein Thf1 (215 aa).

The stretch at 182-213 forms a coiled coil; the sequence is ERMDQAVELVEETIAAEKRKKERRLEEQAQRT.

This sequence belongs to the THF1 family.

Functionally, may be involved in photosynthetic membrane biogenesis. The sequence is that of Protein Thf1 from Synechococcus sp. (strain CC9605).